A 257-amino-acid chain; its full sequence is Protein YIPF5 (257 aa).

Over 1–124 the chain is Cytoplasmic; it reads MSGFDNLNSG…RAADGSIMNE (124 aa). An interaction with Sec23 region spans residues 75-106; sequence PTTPQPFYGDSFEEEPPLLEELGINFDHIWQK. Residues 125-145 traverse the membrane as a helical segment; it reads TDLAGPVVFCLAFGATLLLAG. Residue Lys-146 is a topological domain, lumenal. The chain crosses the membrane as a helical span at residues 147-167; sequence IQFGYVYGISAIGCLGMFCLL. At 168–173 the chain is on the cytoplasmic side; it reads NLMSMT. A helical transmembrane segment spans residues 174 to 194; the sequence is GVSFGCVASVLGYCLLPMILL. The Lumenal portion of the chain corresponds to 195-196; the sequence is SS. The chain crosses the membrane as a helical span at residues 197–217; it reads FAVVFSLQGMVGILLTATIIG. Residues 218 to 236 lie on the Cytoplasmic side of the membrane; the sequence is WCSFSASKIFISALAMDGQ. The chain crosses the membrane as a helical span at residues 237–257; sequence QLLVAYPCALLYGVFALISVF.

It belongs to the YIP1 family. Interacts with the COPII coat components Sec23 (SEC23A and/or SEC23B) and Sec24 (SEC24A and/or SEC24B). Interacts with YIF1A. May interact with RAB1A. Interacts with YIPF3 and YIPF4. In terms of tissue distribution, ubiquitously expressed.

The protein localises to the golgi apparatus. The protein resides in the cis-Golgi network membrane. It localises to the cytoplasmic vesicle. It is found in the COPII-coated vesicle. Its subcellular location is the endoplasmic reticulum membrane. In terms of biological role, plays a role in transport between endoplasmic reticulum and Golgi. In pancreatic beta cells, required to transport proinsulin from endoplasmic reticulum into the Golgi. The chain is Protein YIPF5 from Mus musculus (Mouse).